Here is a 291-residue protein sequence, read N- to C-terminus: Elongation factor Ts (291 aa).

Residues Thr-82–Cys-85 form an involved in Mg(2+) ion dislocation from EF-Tu region.

The protein belongs to the EF-Ts family.

It localises to the cytoplasm. Functionally, associates with the EF-Tu.GDP complex and induces the exchange of GDP to GTP. It remains bound to the aminoacyl-tRNA.EF-Tu.GTP complex up to the GTP hydrolysis stage on the ribosome. This is Elongation factor Ts from Methylobacillus flagellatus (strain ATCC 51484 / DSM 6875 / VKM B-1610 / KT).